We begin with the raw amino-acid sequence, 802 residues long: Copper-exporting P-type ATPase (802 aa).

2 HMA domains span residues 5 to 70 (KKTT…YGVA) and 72 to 138 (ETVE…YDAS). Cu(+) contacts are provided by Cys-16, Cys-19, Cys-83, and Cys-86. 6 helical membrane-spanning segments follow: residues 161–181 (LIIS…HLFN), 192–212 (WFQF…FYVG), 224–244 (MDVL…YEMI), 256–276 (LYFE…YLEA), 411–431 (YFVP…ITLV), and 438–458 (PALV…LGLA). Catalysis depends on Asp-495, which acts as the 4-aspartylphosphate intermediate. The Mg(2+) site is built by Asp-690 and Asp-694. 2 consecutive transmembrane segments (helical) span residues 748-767 (LFWA…LGLL) and 771-790 (VAGA…ALRL).

This sequence belongs to the cation transport ATPase (P-type) (TC 3.A.3) family. Type IB subfamily.

The protein localises to the cell membrane. It carries out the reaction Cu(+)(in) + ATP + H2O = Cu(+)(out) + ADP + phosphate + H(+). Functionally, involved in copper export. In Staphylococcus aureus (strain bovine RF122 / ET3-1), this protein is Copper-exporting P-type ATPase (copA).